We begin with the raw amino-acid sequence, 377 residues long: Opsin-2 (377 aa).

Topologically, residues 1-57 are extracellular; sequence MNNQSENYYHGAQFEALKSAGAIEMLGDGLTGDDLAAIPEHWLSYPAPPASAHTALA. Residue Asn-3 is glycosylated (N-linked (GlcNAc...) asparagine). A helical transmembrane segment spans residues 58 to 78; the sequence is LLYIFFTFAALVGNGMVIFIF. At 79-89 the chain is on the cytoplasmic side; that stretch reads STTKSLRTSSN. A helical membrane pass occupies residues 90–110; that stretch reads FLVLNLAILDFIMMAKAPIFI. The Extracellular segment spans residues 111–126; that stretch reads YNSAMRGFAVGTVGCQ. Cys-125 and Cys-202 are oxidised to a cystine. The chain crosses the membrane as a helical span at residues 127–146; the sequence is IFALMGAYSGIGAGMTNACI. Residues 147–166 are Cytoplasmic-facing; that stretch reads AYDRHSTITRPLDGRLSEGK. The helical transmembrane segment at 167–187 threads the bilayer; the sequence is VLLMVAFVWIYSTPWALLPLL. Over 188–214 the chain is Extracellular; the sequence is KIWGRYVPEGYLTSCSFDYLTNTFDTK. Residues 215–235 form a helical membrane-spanning segment; the sequence is LFVACIFTCSYVFPMSLIIYF. Residues 236–283 lie on the Cytoplasmic side of the membrane; sequence YSGIVKQVFAHEAALREQAKKMNVESLRANQGGSSESAEIRIAKAALT. The helical transmembrane segment at 284–304 threads the bilayer; the sequence is VCFLFVASWTPYGVMALIGAF. The Extracellular portion of the chain corresponds to 305–314; that stretch reads GNQQLLTPGV. Residues 315 to 335 form a helical membrane-spanning segment; it reads TMIPAVACKAVACISPWVYAI. The Cytoplasmic portion of the chain corresponds to 336 to 377; it reads RHPMYRQELQRRMPWLQIDEPDDTVSTATSNTTNSAPPAATA. A disordered region spans residues 355–377; it reads EPDDTVSTATSNTTNSAPPAATA. Low complexity predominate over residues 361–377; it reads STATSNTTNSAPPAATA.

This sequence belongs to the G-protein coupled receptor 1 family. Opsin subfamily. As to expression, in the retina, expression is essentially uniformly distributed, but a higher level is seen in the dorsal region of the retina and in the dorsal rim retinulae.

The protein resides in the membrane. In terms of biological role, visual pigments are the light-absorbing molecules that mediate vision. They consist of an apoprotein, opsin, covalently linked to cis-retinal. May play a role in photoperiodic photoreception. The sequence is that of Opsin-2 (OP2) from Manduca sexta (Tobacco hawkmoth).